The sequence spans 254 residues: Imidazole glycerol phosphate synthase subunit HisF (254 aa).

Catalysis depends on residues D13 and D132.

This sequence belongs to the HisA/HisF family. In terms of assembly, heterodimer of HisH and HisF.

The protein localises to the cytoplasm. It catalyses the reaction 5-[(5-phospho-1-deoxy-D-ribulos-1-ylimino)methylamino]-1-(5-phospho-beta-D-ribosyl)imidazole-4-carboxamide + L-glutamine = D-erythro-1-(imidazol-4-yl)glycerol 3-phosphate + 5-amino-1-(5-phospho-beta-D-ribosyl)imidazole-4-carboxamide + L-glutamate + H(+). It functions in the pathway amino-acid biosynthesis; L-histidine biosynthesis; L-histidine from 5-phospho-alpha-D-ribose 1-diphosphate: step 5/9. Functionally, IGPS catalyzes the conversion of PRFAR and glutamine to IGP, AICAR and glutamate. The HisF subunit catalyzes the cyclization activity that produces IGP and AICAR from PRFAR using the ammonia provided by the HisH subunit. The chain is Imidazole glycerol phosphate synthase subunit HisF from Sulfurovum sp. (strain NBC37-1).